The chain runs to 168 residues: MNPIFEAFWYILPAYFANSSPVVLGGGTPIDFGKKWRDGRRIFGDGKTWRGFFGGITVGTVVGTIQHLMFPGYYGSLKLAVGVAFLLSLGALVGDLIGSFIKRRLNMPRGYPAVGLDQWGFLISALCFAYPLRTIPTGEVLFLLVVTPVIHWLANVFAYRMKWKNVPW.

5 helical membrane passes run 4 to 24 (IFEA…PVVL), 51 to 71 (GFFG…LMFP), 81 to 101 (VGVA…GSFI), 112 to 132 (PAVG…AYPL), and 138 to 158 (GEVL…NVFA).

The protein belongs to the CDP-archaeol synthase family. Requires Mg(2+) as cofactor.

Its subcellular location is the cell membrane. It carries out the reaction 2,3-bis-O-(geranylgeranyl)-sn-glycerol 1-phosphate + CTP + H(+) = CDP-2,3-bis-O-(geranylgeranyl)-sn-glycerol + diphosphate. The protein operates within membrane lipid metabolism; glycerophospholipid metabolism. Functionally, catalyzes the formation of CDP-2,3-bis-(O-geranylgeranyl)-sn-glycerol (CDP-archaeol) from 2,3-bis-(O-geranylgeranyl)-sn-glycerol 1-phosphate (DGGGP) and CTP. This reaction is the third ether-bond-formation step in the biosynthesis of archaeal membrane lipids. The sequence is that of CDP-archaeol synthase from Pyrococcus abyssi (strain GE5 / Orsay).